A 521-amino-acid chain; its full sequence is Circadian clock oscillator protein KaiC (521 aa).

KaiC domains are found at residues 1-248 (MNEP…INIF) and 262-521 (ARIS…LDEE). Positions 50, 51, 52, 53, 54, 55, 90, 225, 226, 227, 229, 231, 241, 291, 292, 293, 294, 295, 296, and 297 each coordinate ATP. A Mg(2+)-binding site is contributed by Thr-54. Thr-296 contacts Mg(2+). Glu-319 contacts Mg(2+). Trp-332 provides a ligand contact to ATP. Ser-432 carries the phosphoserine; by autocatalysis modification. Phosphothreonine; by autocatalysis is present on Thr-433. Residues Arg-452, Lys-458, Met-459, Arg-460, Ser-462, His-464, and Lys-466 each contribute to the ATP site.

This sequence belongs to the KaiC family. In terms of assembly, homohexamer; hexamerization is dependent on ATP-binding. The KaiABC complex composition changes during the circadian cycle to control KaiC phosphorylation. Complexes KaiC(6), KaiA(2-4):KaiC(6), KaiB(6):KaiC(6) and KaiC(6):KaiB(6):KaiA(12) are among the most important forms, many form cooperatively. KaiC interacts with SasA, activating its autokinase function and leading to RpaA activation. Requires Mg(2+) as cofactor. In terms of processing, phosphorylated on serine and threonine residues by autocatalysis. Has a 4 step phosphorylation cycle; the autokinase acts first on Thr-433, then Ser-432. When Ser-432 is modified KaiC switches to an autophosphatase mode, acting first on phospho-Thr-433 then phospho-Ser-432.

It carries out the reaction L-seryl-[protein] + ATP = O-phospho-L-seryl-[protein] + ADP + H(+). It catalyses the reaction L-threonyl-[protein] + ATP = O-phospho-L-threonyl-[protein] + ADP + H(+). The enzyme catalyses ATP + H2O = ADP + phosphate + H(+). The interaction with KaiA enhances its phosphorylation status, while the interaction with KaiB decreases it. Functionally, central component of the KaiABC oscillator complex, which constitutes the main circadian regulator in cyanobacteria. Complex composition changes during the circadian cycle to control KaiC phosphorylation. KaiA stimulates KaiC autophosphorylation, while KaiB sequesters KaiA, leading to KaiC autodephosphorylation. Clock output pathways impact the RpaA transcriptional regulator. KaiC enhances the autophosphorylation activity of SasA, which then transfers its phosphate group to RpaA to activate it. KaiB and KaiC together enhance the phospho-RpaA dephosphatase activity of CikA. Has a weak, temperature-independent ATPase activity; ATPase activity defines the circadian period. The phosphorylation state of KaiC modulates its ATPase activity and effects KaiB binding. In Rippkaea orientalis (strain PCC 8801 / RF-1) (Cyanothece sp. (strain PCC 8801)), this protein is Circadian clock oscillator protein KaiC.